The following is a 201-amino-acid chain: Imidazoleglycerol-phosphate dehydratase (201 aa).

This sequence belongs to the imidazoleglycerol-phosphate dehydratase family.

The protein resides in the cytoplasm. The enzyme catalyses D-erythro-1-(imidazol-4-yl)glycerol 3-phosphate = 3-(imidazol-4-yl)-2-oxopropyl phosphate + H2O. It functions in the pathway amino-acid biosynthesis; L-histidine biosynthesis; L-histidine from 5-phospho-alpha-D-ribose 1-diphosphate: step 6/9. The sequence is that of Imidazoleglycerol-phosphate dehydratase from Synechococcus sp. (strain CC9902).